The chain runs to 2255 residues: MAGSREILLPEVHLNSPIVKHKLYYYILLGNLPNEIDLDDLGPLHNQNWNQIAHEESNLAQRLVNVRNFLITHIPDLRKGHWQEYVNVILWPRILPLIPDFKINDQLPLLKNWDKLVKESCSVINAGTSQCIQNLSYGLTGRGNLFTRSRELSGDRRDIDLKTVVAAWHDSDWKRISDFWIMIKFQMRQLIVRQTDHNDSDLITYIENREGIIIITPELVALFNTENHTLTYMTFEIVLMVSDMYEGRHNILSLCTVSTYLNPLKKRITYLLSLVDNLAFQIGDAVYNIIALLESFVYAQLQMSDPIPELRGQFHAFVCSEILDALRGTNSFTQDELRTVTTNLISPFQDLTPDLTAELLCIMRLWGHPMLTASQAAGKVRESMCAGKVLDFPTIMKTLAFFHTILINGYRRKHHGVWPPLNLPGNASKGLTELMNDNTEISYEFTLKHWKEVSLIKFKKCFDADAGEELSIFMKDKAISAPKQDWMSVFRRSLIKQRHQHHQVPLPNPFNRRLLLNFLGDDKFDPNVELQYVTSGEYLHDDTFCASYSLKEKEIKPDGRIFAKLTKRMRSCQVIAESLLANHAGKLMKENGVVMNQLSLTKSLLTMSQIGIISEKARKSTRDNINQPGFQNIQRNKSHHSKQVNQRDPSDDFELAASFLTTDLKKYCLQWRYQTIIPFAQSLNRMYGYPHLFEWIHLRLMRSTLYVGDPFNPPADTSQFDLDKVINGDIFIVSPRGGIEGLCQKAWTMISIAVIILSATESGTRVMSMVQGDNQAIAVTTRVPRSLPTLEKKTIAFRSCNLFFERLKCNNFGLGHHLKEQETIISSHFFVYSKRIFYQGRILTQALKNASKLCLTADVLGECTQSSCSNLATTVMRLTENGVEKDICFYLNIYMTIKQLSYDIIFPQVSIPGDQITLEYINNPHLVSRLALLPSQLGGLNYLSCSRLFNRNIGDPVVSAVADLKRLIKSGCMDYWILYNLLGRKPGNGSWATLAADPYSINIEYQYPPTTALKRHTQQALMELSTNPMLRGIFSDNAQAEENNLARFLLDREVIFPRVAHIIIEQTSVGRRKQIQGYLDSTRSIMRKSLEIKPLSNRKLNEILDYNINYLAYNLALLKNAIEPPTYLKAMTLETCSIDIARNLRKLSWAPLLGGRNLEGLETPDPIEITAGALIVGSGYCEQCAAGDNRFTWFFLPSGIEIGGDPRDNPPIRVPYIGSRTDERRVASMAYIRGASSSLKAVLRLAGVYIWAFGDTLENWIDALDLSHTRVNITLEQLQSLTPLPTSANLTHRLDDGTTTLKFTPASSYTFSSFTHISNDEQYLTINDKTADSNIIYQQLMITGLGILETWNNPPINRTFEESTLHLHTGASCCVRPVDSCILSEALTVKPHITVPYSNKFVFDEDPLSEYETAKLESLSFQAQLGNIDAVDMTGKLTLLSQFTARQIINAITGLDESVSLTNDAIVASDYVSNWISECMYTKLDELFMYCGWELLLELSYQMYYLRVVGWSNIVDYSYMILRRIPGAALNNLASTLSHPKLFRRAINLDIVAPLNAPHFASLDYIKMSVDAILWGCKRVINVLSNGGDLELVVTSEDSLILSDRSMNLIARKLTLLSLIHHNGLELPKIKGFSPDEKCFALTEFLRKVVNSGLSSIENLSNFMYNVENPRLAAFASNNYYLTRKLLNSIRDTESGQVAVTSYYESLEYIDSLKLTPHVPGTSCIEDDSLCTNDYIIWIIESNANLEKYPIPNSPEDDSNFHNFKLNAPSHHTLRPLGLSSTAWYKGISCCRYLERLKLPQGDHLYIAEGSGASMTIIEYLFPGRKIYYNSLFSSGDNPPQRNYAPMPTQFIESVPYKLWQAHTDQYPEIFEDFIPLWNGNAAMTDIGMTACVEFIINRVGPRTCSLVHVDLESSASLNQQCLSKPIINAIITATTVLCPHGVLILKYSWLPFTRFSTLITFLWCYFERITVLRSTYSDPANHEVYLICILANNFAFQTVSQATGMAMTLTDQGFTLISPERINQYWDGHLKQERIVAEAIDKVVLGENALFNSSDNELILKCGGTPNARNLIDIEPVATFIEFEQLICTMLTTHLKEIIDITRSGTQDYESLLLTPYNLGLLGKISTIVRLLTERILNHTIRNWLILPPSLRMIVKQDLEFGIFRITSILNSDRFLKLSPNRKYLIAQLTAGYIRKLIEGDCNIDLTRPIQKQIWKALGCVVYCHDPMDQRESTEFIDININEEIDRGIDGEEI.

Positions Arg618–Pro649 are disordered. A compositionally biased stretch (polar residues) spans Asp623 to Arg635. One can recognise a RdRp catalytic domain in the interval Ala656–Gly840. The region spanning Arg1775–Ile1988 is the Mononegavirus-type SAM-dependent 2'-O-MTase domain. Leu1805 to Ser1814 is an ATP binding site.

The protein belongs to the paramyxovirus L protein family. Interacts with the P protein.

The protein resides in the virion. Its subcellular location is the host cytoplasm. It catalyses the reaction RNA(n) + a ribonucleoside 5'-triphosphate = RNA(n+1) + diphosphate. It carries out the reaction a 5'-end (5'-triphosphoguanosine)-adenylyl-adenylyl-cytidylyl-adenosine in mRNA + 2 S-adenosyl-L-methionine = a 5'-end (N(7)-methyl 5'-triphosphoguanosine)-(2'-O-methyladenylyl)-adenylyl-cytidylyl-adenosine in mRNA + 2 S-adenosyl-L-homocysteine + H(+). The catalysed reaction is a 5'-end (5'-triphosphoguanosine)-adenylyl-adenylyl-cytidylyl-adenosine in mRNA + S-adenosyl-L-methionine = a 5'-end (5'-triphosphoguanosine)-(2'-O-methyladenylyl)-adenylyl-cytidylyl-adenosine in mRNA + S-adenosyl-L-homocysteine + H(+). The enzyme catalyses a 5'-end triphospho-adenylyl-adenylyl-cytidylyl-adenosine in mRNA + GDP + H(+) = a 5'-end (5'-triphosphoguanosine)-adenylyl-adenylyl-cytidylyl-adenosine in mRNA + diphosphate. It catalyses the reaction a 5'-end (5'-triphosphoguanosine)-(2'-O-methyladenylyl)-adenylyl-cytidylyl-adenosine in mRNA + S-adenosyl-L-methionine = a 5'-end (N(7)-methyl 5'-triphosphoguanosine)-(2'-O-methyladenylyl)-adenylyl-cytidylyl-adenosine in mRNA + S-adenosyl-L-homocysteine. It carries out the reaction GTP + H2O = GDP + phosphate + H(+). RNA-directed RNA polymerase that catalyzes the transcription of viral mRNAs, their capping and polyadenylation. The template is composed of the viral RNA tightly encapsidated by the nucleoprotein (N). The viral polymerase binds to the genomic RNA at the 3' leader promoter, and transcribes subsequently all viral mRNAs with a decreasing efficiency. The first gene is the most transcribed, and the last the least transcribed. The viral phosphoprotein acts as a processivity factor. Capping is concomitant with initiation of mRNA transcription. Indeed, a GDP polyribonucleotidyl transferase (PRNTase) adds the cap structure when the nascent RNA chain length has reached few nucleotides. Ribose 2'-O methylation of viral mRNA cap precedes and facilitates subsequent guanine-N-7 methylation, both activities being carried by the viral polymerase. Polyadenylation of mRNAs occur by a stuttering mechanism at a slipery stop site present at the end viral genes. After finishing transcription of a mRNA, the polymerase can resume transcription of the downstream gene. Functionally, RNA-directed RNA polymerase that catalyzes the replication of viral genomic RNA. The template is composed of the viral RNA tightly encapsidated by the nucleoprotein (N). The replicase mode is dependent on intracellular N protein concentration. In this mode, the polymerase replicates the whole viral genome without recognizing transcriptional signals, and the replicated genome is not caped or polyadenylated. In Parainfluenza virus 5 (strain W3) (PIV5), this protein is RNA-directed RNA polymerase L (L).